The following is a 202-amino-acid chain: S-modulin (202 aa).

A lipid anchor (N-myristoyl glycine) is attached at Gly-2. EF-hand domains follow at residues 25 to 60 (QEEL…FPDA), 61 to 96 (DPKA…TSSG), 97 to 132 (KANQ…IFKM), and 147 to 182 (TPEK…NKEI). Asp-74, Asn-76, Asp-78, Thr-80, Glu-85, Asp-110, Asp-112, Asn-114, Thr-116, and Glu-121 together coordinate Ca(2+).

It belongs to the recoverin family. Post-translationally, the N-terminus is blocked.

Functionally, calcium-dependent regulator of light sensitivity of cGMP phosphodiesterase in rod outer segments. Controls rhodopsin phosphorylation in a Ca(2+)-dependent manner. The protein is S-modulin of Aquarana catesbeiana (American bullfrog).